Consider the following 244-residue polypeptide: 3-oxoacyl-[acyl-carrier-protein] reductase FabG (244 aa).

NADP(+) contacts are provided by residues 12–15 (GASR) and Thr-37. Ca(2+)-binding residues include Gly-50 and Gly-53. Residues 59–60 (NV) and Asn-86 contribute to the NADP(+) site. Ser-138 provides a ligand contact to substrate. Residue Asn-145 participates in Ca(2+) binding. The active-site Proton acceptor is the Tyr-151. Residues 151 to 155 (YAAAK) and Ile-184 contribute to the NADP(+) site. Residues Glu-233 and Thr-234 each coordinate Ca(2+).

The protein belongs to the short-chain dehydrogenases/reductases (SDR) family. Homotetramer.

It carries out the reaction a (3R)-hydroxyacyl-[ACP] + NADP(+) = a 3-oxoacyl-[ACP] + NADPH + H(+). The protein operates within lipid metabolism; fatty acid biosynthesis. Functionally, catalyzes the NADPH-dependent reduction of beta-ketoacyl-ACP substrates to beta-hydroxyacyl-ACP products, the first reductive step in the elongation cycle of fatty acid biosynthesis. The sequence is that of 3-oxoacyl-[acyl-carrier-protein] reductase FabG (fabG) from Salmonella typhi.